Consider the following 1017-residue polypeptide: Voltage-gated delayed rectifier potassium channel KCNH4 (1017 aa).

At 1-228 (MPVMKGLLAP…LLHYSVSKAI (228 aa)) the chain is on the cytoplasmic side. A PAS domain is found at 14 to 90 (FLDTIATRFD…QRLHKALEGH (77 aa)). The PAC domain occupies 93-145 (HRAEICFYRKDGSAFWCLLDMMPIKNEMGEVVLFLFSFKDITQSGSPGLGPQG). A disordered region spans residues 138 to 157 (SPGLGPQGGRGDSNHENSLG). Residues 139–148 (PGLGPQGGRG) are compositionally biased toward gly residues. The helical transmembrane segment at 229-249 (WDGLILLATFYVAVTVPYNVC) threads the bilayer. Residues 250-259 (FSGDDDTPIT) lie on the Extracellular side of the membrane. A helical membrane pass occupies residues 260 to 280 (SRHTLVSDIAVEMLFILDIIL). Topologically, residues 281 to 302 (NFRTTYVSQSGQVISAPRSIGL) are cytoplasmic. Residues 303 to 323 (HYLATWFFIDLIAALPFDLLY) form a helical membrane-spanning segment. Over 324-332 (IFNITVTSL) the chain is Extracellular. N-linked (GlcNAc...) asparagine glycosylation is present at Asn-326. Residues 333–353 (VHLLKTVRLLRLLRLLQKLER) traverse the membrane as a helical; Voltage-sensor segment. Residues 354–361 (YSQCSAVV) lie on the Cytoplasmic side of the membrane. A helical membrane pass occupies residues 362-382 (LTLLMSVFALLAHWMACIWYV). Residues 383-427 (IGRREMEANDPLLWDIGWLHELGKRLEVPYVNGSVGGPSRRSAYI) are Extracellular-facing. The N-linked (GlcNAc...) asparagine glycan is linked to Asn-414. The pore-forming intramembrane region spans 428–448 (AALYFTLSSLTSVGFGNVCAN). A Selectivity filter motif is present at residues 439 to 444 (SVGFGN). Over 449 to 482 (TDAEKIFSICTMLIGALMHAVVFGNVTAIIQRMY) the chain is Extracellular. Asn-473 carries an N-linked (GlcNAc...) asparagine glycan. The chain crosses the membrane as a helical span at residues 483–503 (SRRSLYHSRMKDLKDFIRVHR). Over 504–1017 (LPRPLKQRML…SFQSRSDTFH (514 aa)) the chain is Cytoplasmic. A cNMP-binding domain region spans residues 556 to 620 (LFGAASRGCL…AILGKGDLIG (65 aa)). Residues 691 to 724 (GSDTSGLSRFSRSPRLSQPRSESLGSSSDKTLPS) show a composition bias toward polar residues. Disordered regions lie at residues 691-749 (GSDT…LPNL), 772-803 (LVSS…RCSA), 821-875 (PDLS…EAEE), and 971-1017 (LLDL…DTFH). Low complexity predominate over residues 772–787 (LVSSPSLSPSLSPALA). Residues 978 to 1002 (ILPPYPSEPDPLGPSPVPEASPPTP) show a composition bias toward pro residues. Residues 1008 to 1017 (SFQSRSDTFH) are compositionally biased toward polar residues.

This sequence belongs to the potassium channel family. H (Eag) (TC 1.A.1.20) subfamily. Kv12.3/KCNH4 sub-subfamily. In terms of assembly, the potassium channel is probably composed of a homo- or heterotetrameric complex of pore-forming alpha subunits that can associate with modulating beta subunits. As to expression, detected only in brain, in particular in the telencephalon. Detected in putamen and caudate nucleus, and at lower levels in cerebral cortex, occipital and hippocampus.

It is found in the membrane. The enzyme catalyses K(+)(in) = K(+)(out). Pore-forming (alpha) subunit of a voltage-gated delayed rectifier. Activates at more negative voltages, exhibits fast prepulse-independent activation kinetics and deactivates much more slowly, but shows no inactivation. This chain is Voltage-gated delayed rectifier potassium channel KCNH4, found in Homo sapiens (Human).